Reading from the N-terminus, the 203-residue chain is NADH-quinone oxidoreductase subunit C (203 aa).

This sequence belongs to the complex I 30 kDa subunit family. As to quaternary structure, NDH-1 is composed of 14 different subunits. Subunits NuoB, C, D, E, F, and G constitute the peripheral sector of the complex.

It is found in the cell inner membrane. The catalysed reaction is a quinone + NADH + 5 H(+)(in) = a quinol + NAD(+) + 4 H(+)(out). NDH-1 shuttles electrons from NADH, via FMN and iron-sulfur (Fe-S) centers, to quinones in the respiratory chain. The immediate electron acceptor for the enzyme in this species is believed to be ubiquinone. Couples the redox reaction to proton translocation (for every two electrons transferred, four hydrogen ions are translocated across the cytoplasmic membrane), and thus conserves the redox energy in a proton gradient. In Bartonella tribocorum (strain CIP 105476 / IBS 506), this protein is NADH-quinone oxidoreductase subunit C.